The primary structure comprises 769 residues: Phosphatidylinositol 4-phosphate 5-kinase 8 (769 aa).

MORN repeat units follow at residues 16–38 (YSGQ…DGII), 39–61 (YEGD…SGAK), 62–84 (YEGD…DGSV), 85–107 (YAGA…NSDV), 108–130 (YDGS…NGNR), 131–153 (FIGN…NGDL), 154–176 (FNGF…DGGF), and 177–198 (YFGT…AGSK). The segment at 266-289 (PPRDFMHHGPSSKSARSVDSGQSE) is disordered. Positions 276 to 288 (SSKSARSVDSGQS) are enriched in polar residues. In terms of domain architecture, PIPK spans 344–765 (WNHYLMLNLQ…RFIDFLLKVF (422 aa)). Positions 725 to 746 (YNMKKKVEHTCKSMKYDPMTIS) are activation loop.

It carries out the reaction a 1,2-diacyl-sn-glycero-3-phospho-(1D-myo-inositol 4-phosphate) + ATP = a 1,2-diacyl-sn-glycero-3-phospho-(1D-myo-inositol-4,5-bisphosphate) + ADP + H(+). The sequence is that of Phosphatidylinositol 4-phosphate 5-kinase 8 (PIP5K8) from Arabidopsis thaliana (Mouse-ear cress).